The sequence spans 36 residues: Putative DNA-binding protein inhibitor ID-2B (36 aa).

The polypeptide is Putative DNA-binding protein inhibitor ID-2B (ID2B) (Homo sapiens (Human)).